An 809-amino-acid polypeptide reads, in one-letter code: 3',5'-cyclic-AMP phosphodiesterase 4D (809 aa).

The segment at 1-107 (MEAEGSSAPA…SGATGRVRHR (107 aa)) is disordered. Phosphoserine is present on residues His-54, Pro-59, and Pro-63. Residues 58–89 (PPPPPPSPQPQPQCPLQPPPPPPLPPPPPPPG) show a composition bias toward pro residues. Over residues 90–102 (AARGRYASSGATG) the composition is skewed to low complexity. A phosphoserine mark is found at Ser-142, Ser-299, Ser-301, Ser-348, and Ser-375. Residues 343–364 (EVEIPSPTQKEKEKKKRPMSQI) form a disordered region. Residues 386-715 (VKTEQEDVLA…EWYQSTIPQS (330 aa)) enclose the PDEase domain. A Glycyl lysine isopeptide (Lys-Gly) (interchain with G-Cter in SUMO) cross-link involves residue Lys-387. Residue His-462 is the Proton donor of the active site. Residue His-462 participates in 3',5'-cyclic AMP binding. His-462 serves as a coordination point for AMP. Residues His-466, His-502, Asp-503, and Asp-620 each coordinate Zn(2+). Residues Asp-503, Asp-620, Asn-623, Gln-671, and Phe-674 each contribute to the AMP site. Residue Asp-503 coordinates Mg(2+). A Mn(2+)-binding site is contributed by Asp-503. 2 residues coordinate 3',5'-cyclic AMP: Gln-671 and Phe-674. 2 disordered regions span residues 710 to 729 (STIPQSPSPAPDDPEEGRQG) and 739 to 809 (TLEE…SPDT). A compositionally biased stretch (polar residues) spans 762–773 (CSDSKTLCTQDS). Acidic residues predominate over residues 779–796 (PLDEQVEEEAVGEEEESQ).

It belongs to the cyclic nucleotide phosphodiesterase family. PDE4 subfamily. As to quaternary structure, homodimer for the long isoforms. Isoforms with truncated N-termini are monomeric. Isoform 3 is part of a ternary complex containing PRKAR2A, PRKAR2B and AKAP9. Interacts with PDE4DIP. Identified in a complex composed of RYR1, PDE4D, PKA, FKBP1A and protein phosphatase 1 (PP1). Isoform 5, isoform N3 and isoform 12 bind RACK1 via their unique N-terminus. Binds ARRB2. Interacts (via N-terminal region) with SHANK2 (via proline-rich region); the interaction is increased in a PKA-dependent manner. The cofactor is Zn(2+). It depends on Mg(2+) as a cofactor. Mn(2+) serves as cofactor. Post-translationally, long isoforms that share a conserved PKA phosphorylation site in the N-terminus are activated by PKA through phosphorylation. Isoform 3 and isoform 7 are activated by phosphorylation (in vitro), but not isoform 6. Isoform N3 and isoform 12 are phosphorylated on Ser-49, Ser-51, Ser-55 and Ser-59. In terms of processing, sumoylation of long isoforms by PIAS4 augments their activation by PKA phosphorylation and represses their inhibition by ERK phosphorylation. As to expression, expressed in colonic epithelial cells (at protein level). Widespread; most abundant in skeletal muscle. In terms of tissue distribution, detected in brain. Detected in brain, placenta, lung and kidney. As to expression, detected in heart and skeletal muscle.

It is found in the apical cell membrane. The protein localises to the cytoplasm. Its subcellular location is the membrane. The protein resides in the cytoskeleton. It localises to the microtubule organizing center. It is found in the centrosome. It carries out the reaction 3',5'-cyclic AMP + H2O = AMP + H(+). It participates in purine metabolism; 3',5'-cyclic AMP degradation; AMP from 3',5'-cyclic AMP: step 1/1. Its activity is regulated as follows. Inhibited by rolipram. Activated by phosphatidic acid. Its function is as follows. Hydrolyzes the second messenger cAMP, which is a key regulator of many important physiological processes. This Homo sapiens (Human) protein is 3',5'-cyclic-AMP phosphodiesterase 4D.